A 421-amino-acid chain; its full sequence is Forkhead box protein fkh-4 (421 aa).

Positions 118–218 (RPPISYVALC…SDADFDFFRK (101 aa)) form a DNA-binding region, fork-head.

The protein localises to the nucleus. In terms of biological role, transcription factor. Regulates expression of a class of small RNAs, known as 21U-RNAs, perhaps acting redundantly with fkh-3 and fkh-5. The protein is Forkhead box protein fkh-4 of Caenorhabditis elegans.